We begin with the raw amino-acid sequence, 254 residues long: Homeobox protein Nkx-6.3 (254 aa).

Disordered stretches follow at residues Q112 to F140 and K191 to S228. The span at A120–G129 shows a compositional bias: polar residues. A DNA-binding region (homeobox) is located at residues K133–S192.

The protein localises to the nucleus. Its function is as follows. Putative transcription factor, which may be involved in patterning of central nervous system and pancreas. This Xenopus laevis (African clawed frog) protein is Homeobox protein Nkx-6.3 (nkx6-3).